A 141-amino-acid chain; its full sequence is Hemoglobin subunit alpha (141 aa).

Residues 1–141 (VLSSDDKCNV…VSSVLTSKYR (141 aa)) form the Globin domain. Residue His58 coordinates O2. His87 is a binding site for heme b.

This sequence belongs to the globin family. As to quaternary structure, heterotetramer of two alpha chains and two beta chains. As to expression, red blood cells.

Functionally, involved in oxygen transport from the lung to the various peripheral tissues. The sequence is that of Hemoglobin subunit alpha (HBA) from Crocodylus niloticus (Nile crocodile).